The chain runs to 199 residues: MSYLGVGLSPVNVAGTKMKLMDRKVRLTELILRCSVCALALVAAILIATDTQVKEIFTIQKKAKYTDMKALVFLVVVNGIAAAYSLLHMVRCVVGMMKGSVLFSKPLAWAIFSGDQAIAYLTVAGVAAAAQSAAFAKLGEPELQWMKICTIYGKFCNQVGEGIATALLASIGMVLISSISAFALFRLYGGNKAQQGSRW.

The Cytoplasmic segment spans residues 1 to 26 (MSYLGVGLSPVNVAGTKMKLMDRKVR). Residues 27-47 (LTELILRCSVCALALVAAILI) form a helical membrane-spanning segment. Topologically, residues 48 to 69 (ATDTQVKEIFTIQKKAKYTDMK) are extracellular. The chain crosses the membrane as a helical span at residues 70-90 (ALVFLVVVNGIAAAYSLLHMV). Residues 91-106 (RCVVGMMKGSVLFSKP) are Cytoplasmic-facing. The chain crosses the membrane as a helical span at residues 107–127 (LAWAIFSGDQAIAYLTVAGVA). Over 128–164 (AAAQSAAFAKLGEPELQWMKICTIYGKFCNQVGEGIA) the chain is Extracellular. Residues 165-185 (TALLASIGMVLISSISAFALF) form a helical membrane-spanning segment. At 186-199 (RLYGGNKAQQGSRW) the chain is on the cytoplasmic side.

The protein belongs to the Casparian strip membrane proteins (CASP) family. In terms of assembly, homodimer and heterodimers.

The protein resides in the cell membrane. This Eutrema halophilum (Salt cress) protein is CASP-like protein 2B1.